Consider the following 174-residue polypeptide: UPF0316 protein Dhaf_3052 (174 aa).

3 consecutive transmembrane segments (helical) span residues 4–24 (ILQFVLIIITINITYVTLTTI), 35–55 (VYASLLSVLEVFIYIMGLSII), and 59–79 (LDSYWNIAAYCCGYGVGVYLG).

It belongs to the UPF0316 family.

The protein localises to the cell membrane. The polypeptide is UPF0316 protein Dhaf_3052 (Desulfitobacterium hafniense (strain DSM 10664 / DCB-2)).